The chain runs to 122 residues: Large ribosomal subunit protein eL34 (122 aa).

It belongs to the eukaryotic ribosomal protein eL34 family.

The protein is Large ribosomal subunit protein eL34 (rpl34) of Dictyostelium discoideum (Social amoeba).